The sequence spans 142 residues: Galactose-6-phosphate isomerase subunit LacA (142 aa).

It belongs to the LacAB/RpiB family. As to quaternary structure, heteromultimeric protein consisting of LacA and LacB.

It carries out the reaction aldehydo-D-galactose 6-phosphate = keto-D-tagatose 6-phosphate. The protein operates within carbohydrate metabolism; D-galactose 6-phosphate degradation; D-tagatose 6-phosphate from D-galactose 6-phosphate: step 1/1. The chain is Galactose-6-phosphate isomerase subunit LacA from Clostridium acetobutylicum (strain ATCC 824 / DSM 792 / JCM 1419 / IAM 19013 / LMG 5710 / NBRC 13948 / NRRL B-527 / VKM B-1787 / 2291 / W).